The chain runs to 117 residues: uncharacterized protein (117 aa).

This is an uncharacterized protein from Rattus norvegicus (Rat).